A 368-amino-acid chain; its full sequence is Protein-glutamate methylesterase/protein-glutamine glutaminase 1 (368 aa).

Positions 4–121 (KVLVVDDSGF…SRNPDKVRQL (118 aa)) constitute a Response regulatory domain. 4-aspartylphosphate is present on Asp55. Residues 138–176 (SLPPLPSATSSSHAPASSSSVGASARVGAGASPAPASTS) form a disordered region. Positions 144 to 176 (SATSSSHAPASSSSVGASARVGAGASPAPASTS) are enriched in low complexity. The region spanning 172 to 368 (PASTSAAPKR…IGRHLVEACQ (197 aa)) is the CheB-type methylesterase domain. Catalysis depends on residues Ser192, His219, and Asp312.

The protein belongs to the CheB family. Phosphorylated by CheA. Phosphorylation of the N-terminal regulatory domain activates the methylesterase activity.

It is found in the cytoplasm. It carries out the reaction [protein]-L-glutamate 5-O-methyl ester + H2O = L-glutamyl-[protein] + methanol + H(+). The catalysed reaction is L-glutaminyl-[protein] + H2O = L-glutamyl-[protein] + NH4(+). Functionally, involved in chemotaxis. Part of a chemotaxis signal transduction system that modulates chemotaxis in response to various stimuli. Catalyzes the demethylation of specific methylglutamate residues introduced into the chemoreceptors (methyl-accepting chemotaxis proteins or MCP) by CheR. Also mediates the irreversible deamidation of specific glutamine residues to glutamic acid. This Pseudomonas aeruginosa (strain ATCC 15692 / DSM 22644 / CIP 104116 / JCM 14847 / LMG 12228 / 1C / PRS 101 / PAO1) protein is Protein-glutamate methylesterase/protein-glutamine glutaminase 1.